Here is a 259-residue protein sequence, read N- to C-terminus: Phosphate import ATP-binding protein PstB 2 (259 aa).

Positions 12-254 (ISARGLNVHY…PKEPLTQGYI (243 aa)) constitute an ABC transporter domain. 44–51 (GPSGCGKS) lines the ATP pocket.

This sequence belongs to the ABC transporter superfamily. Phosphate importer (TC 3.A.1.7) family. As to quaternary structure, the complex is composed of two ATP-binding proteins (PstB), two transmembrane proteins (PstC and PstA) and a solute-binding protein (PstS).

It localises to the cell inner membrane. It catalyses the reaction phosphate(out) + ATP + H2O = ADP + 2 phosphate(in) + H(+). Functionally, part of the ABC transporter complex PstSACB involved in phosphate import. Responsible for energy coupling to the transport system. This Paramagnetospirillum magneticum (strain ATCC 700264 / AMB-1) (Magnetospirillum magneticum) protein is Phosphate import ATP-binding protein PstB 2.